We begin with the raw amino-acid sequence, 199 residues long: 7-methyl-GTP pyrophosphatase (199 aa).

The active-site Proton acceptor is Asp76.

Belongs to the Maf family. YceF subfamily. It depends on a divalent metal cation as a cofactor.

The protein resides in the cytoplasm. It catalyses the reaction N(7)-methyl-GTP + H2O = N(7)-methyl-GMP + diphosphate + H(+). Its function is as follows. Nucleoside triphosphate pyrophosphatase that hydrolyzes 7-methyl-GTP (m(7)GTP). May have a dual role in cell division arrest and in preventing the incorporation of modified nucleotides into cellular nucleic acids. The chain is 7-methyl-GTP pyrophosphatase (maf-2) from Brucella suis biovar 1 (strain 1330).